The chain runs to 259 residues: Ribonuclease HII (259 aa).

The RNase H type-2 domain maps to 69–257; the sequence is VAVCGVDEVG…VLEESQGLIY (189 aa). Positions 75, 76, and 167 each coordinate a divalent metal cation.

This sequence belongs to the RNase HII family. Mn(2+) serves as cofactor. It depends on Mg(2+) as a cofactor.

It is found in the cytoplasm. The enzyme catalyses Endonucleolytic cleavage to 5'-phosphomonoester.. Functionally, endonuclease that specifically degrades the RNA of RNA-DNA hybrids. The protein is Ribonuclease HII of Shouchella clausii (strain KSM-K16) (Alkalihalobacillus clausii).